The primary structure comprises 519 residues: MLESIRVTEKLHWPEHELAKKFVLNAEEALITDSKRSFSSLSSGILKDTFTTGTSSYNVLLQSKEEKKHRSQKRFSSASSKQHRKPSKSPSSSHSKDPSRMTALVPGTGAGTWYCLDGQSAVFVTSSVPSPVKFTRDISITGSGLALPPKPKSKVKRRNLTRLPKPKQQPQLCRSFERGDDISGKKLCILTAIKPINLEKEKLRFFKSDYTYNPQFEYANPTLPGVLAKHSNASDRFLKQSINIMELTLQKYGSYEKFEQATGGSLLSKTRIWSHVRKYMVKEGCLGEIVVHLTEDLLSRASMTVVNGCPTLTINISTAREHWLEGMLRHEIGTHYFRGINNLQQPWNSWIGRKKHELKPNNPTEEGLASIHSVLFRKDPFLWRAALLYYTVYKASHMSFCELFKDIGKFVKDPNTRWDYCVRAKRGWTDTSEPGCFSKDQVYLDGVLQILRFRESIDFHLLTALGKVSYEDVDRLKELAVTENMRVPHFLHDHSRYMEHLERIMEVNELTDAELKNLI.

The segment at 63–103 (SKEEKKHRSQKRFSSASSKQHRKPSKSPSSSHSKDPSRMTA) is disordered. Histidine 330 provides a ligand contact to Zn(2+). Residue glutamate 331 is the Nucleophile of the active site. Zn(2+)-binding residues include histidine 335 and glutamate 366.

It depends on Zn(2+) as a cofactor.

Its function is as follows. Putative tyrosine carboxypeptidase. This chain is Putative tyrosine carboxypeptidase MATCAP2, found in Mus musculus (Mouse).